Reading from the N-terminus, the 179-residue chain is uncharacterized protein (179 aa).

This is an uncharacterized protein from Escherichia coli (strain K12).